Reading from the N-terminus, the 156-residue chain is U4/U6.U5 small nuclear ribonucleoprotein 27 kDa protein (156 aa).

The segment at methionine 1–threonine 98 is disordered. A compositionally biased stretch (basic residues) spans arginine 13–serine 59. Residues arginine 66–threonine 98 are compositionally biased toward basic and acidic residues.

Belongs to the SNUT3 family. As to quaternary structure, part of a tri-snRNP complex.

Its subcellular location is the nucleus. Functionally, may play a role in mRNA splicing. This chain is U4/U6.U5 small nuclear ribonucleoprotein 27 kDa protein (snrnp27), found in Xenopus tropicalis (Western clawed frog).